The following is a 264-amino-acid chain: Apolipoprotein A-I (264 aa).

The first 18 residues, 1-18, serve as a signal peptide directing secretion; it reads MKAVLLVVAALFLAGSQA. Tandem repeats lie at residues 67–88 and 89–110. The interval 67-264 is 10 X approximate tandem repeats; sequence LRLSDNWDTL…DQASKQLAAQ (198 aa). One copy of the 3; half-length repeat lies at 111-121; that stretch reads EDLQDVKHKVQ. Tandem repeats lie at residues 122 to 143, 144 to 165, 166 to 187, 188 to 207, and 208 to 229. Met-193 is modified (methionine sulfoxide). The 9; half-length repeat unit spans residues 230-240; the sequence is PALEDLRQGLL. Copy 10 of the repeat occupies 241–264; the sequence is PVLENLKASILSSIDQASKQLAAQ.

This sequence belongs to the apolipoprotein A1/A4/E family. In terms of assembly, homodimer. Interacts with APOA1BP and CLU. Component of a sperm activating protein complex (SPAP), consisting of APOA1, an immunoglobulin heavy chain, an immunoglobulin light chain and albumin. Interacts with NDRG1. Interacts with SCGB3A2. Interacts with NAXE and YJEFN3. Glycosylated. Post-translationally, palmitoylated. In terms of processing, phosphorylation sites are present in the extracellular medium.

It is found in the secreted. Its function is as follows. Participates in the reverse transport of cholesterol from tissues to the liver for excretion by promoting cholesterol efflux from tissues and by acting as a cofactor for the lecithin cholesterol acyltransferase (LCAT). As part of the SPAP complex, activates spermatozoa motility. The protein is Apolipoprotein A-I (APOA1) of Cavia porcellus (Guinea pig).